Here is a 201-residue protein sequence, read N- to C-terminus: Putative ferritin heavy polypeptide-like 19 (201 aa).

The Ferritin-like diiron domain maps to 1–123 (MAFYFDQDDA…GYLSNLHKMG (123 aa)).

This sequence belongs to the ferritin family.

This Homo sapiens (Human) protein is Putative ferritin heavy polypeptide-like 19 (FTH1P19).